A 246-amino-acid polypeptide reads, in one-letter code: Probable phosphatase PBPRB2022 (246 aa).

The Zn(2+) site is built by histidine 8, histidine 10, histidine 16, histidine 41, glutamate 74, histidine 102, histidine 132, aspartate 193, and histidine 195.

This sequence belongs to the PHP family. The cofactor is Zn(2+).

The chain is Probable phosphatase PBPRB2022 from Photobacterium profundum (strain SS9).